We begin with the raw amino-acid sequence, 290 residues long: Transposon Ty3-G Gag polyprotein (290 aa).

S2 carries the N-acetylserine modification. Residues 265–282 (RLCFYCKKEGHRLNECRA) form a CCHC-type zinc finger.

It localises to the cytoplasm. Capsid protein (CA) is the structural component of the virus-like particle (VLP), forming the shell that encapsulates the retrotransposons dimeric RNA genome. Its function is as follows. Nucleocapsid protein p9 (NC) forms the nucleocore that coats the retro-elements dimeric RNA. Binds these RNAs through its zinc fingers. Promotes primer tRNA(i)-Met annealing to the multipartite primer-binding site (PBS), dimerization of Ty3 RNA and initiation of reverse transcription. The chain is Transposon Ty3-G Gag polyprotein (TY3A-G) from Saccharomyces cerevisiae (strain ATCC 204508 / S288c) (Baker's yeast).